The following is a 346-amino-acid chain: HLA class I histocompatibility antigen, alpha chain F (346 aa).

Residues 1–21 form the signal peptide; the sequence is MAPRSLLLLLSGALALTDTWA. The tract at residues 22–111 is alpha-1; sequence GSHSLRYFST…LLRRYNQSEA (90 aa). Over 22–305 the chain is Extracellular; that stretch reads GSHSLRYFST…EQSPQPTIPI (284 aa). 2 residues coordinate a peptide antigen: Asn-91 and Arg-105. N-linked (GlcNAc...) asparagine glycosylation is present at Asn-107. The alpha-2 stretch occupies residues 112–203; sequence GSHTLQGMNG…ENGKETLQRA (92 aa). 2 cysteine pairs are disulfide-bonded: Cys-122–Cys-185 and Cys-224–Cys-280. Positions 164, 168, and 176 each coordinate a peptide antigen. The tract at residues 204–295 is alpha-3; the sequence is DPPKAHVAHH…GLPQPLILRW (92 aa). One can recognise an Ig-like C1-type domain in the interval 206–296; sequence PKAHVAHHPI…LPQPLILRWE (91 aa). The segment at 296–305 is connecting peptide; it reads EQSPQPTIPI. The chain crosses the membrane as a helical span at residues 306–329; the sequence is VGIVAGLVVLGAVVTGAVVAAVMW. The Cytoplasmic portion of the chain corresponds to 330–346; the sequence is RKKSSDRNRGSYSQAAV. The Sorting signal sequence; Golgi-retention signal; ER-retention signal motif lies at 336–338; the sequence is RNR.

The protein belongs to the MHC class I family. In terms of assembly, forms a heterotrimer with B2M and a self-peptide. Binds a diverse number of peptides ranging from 7 to more than 30 amino acids. Peptide-bound HLA-F-B2M interacts with LILRB1 and LILRB2 but not with KIR3DS1 or KIR3DL2; this interaction is direct. The OC form interacts with KIR3DS1, KIR2DS4 and KIR3DL2; this interaction is direct. Interacts with TAP1-TAP2 complex and CALR; this interaction is required for appropriate folding and peptide loading. Interacts with the coat protein complex II and 14-3-3 proteins; these interactions likely control the anterograde ER-to-Golgi transport of HLA-F. HLA-F-B2M complex interacts with the heavy chain of other MHC class I molecules including HLA-A and HLA-E; this interaction may regulate the intracellular trafficking and the stability of peptide-free MHC class I OCs. In terms of processing, N-glycosylated. As to expression, expressed in resting B cells (at protein level). Expressed in secondary lymphoid organs rich in B and T cells such as the tonsils, spleen, and thymus (at protein level). Expressed in the endothelial cells of the tonsils. Expressed on activated lymphoid cells including B cells, NK cells, CD4+ T cells and memory T cells (at protein level). Expressed in motor neurons of spinal cord.

It is found in the cell membrane. The protein resides in the early endosome membrane. The protein localises to the lysosome membrane. In terms of biological role, non-classical major histocompatibility class Ib molecule postulated to play a role in immune surveillance, immune tolerance and inflammation. Functions in two forms, as a heterotrimeric complex with B2M/beta-2 microglobulin and a peptide (peptide-bound HLA-F-B2M) and as an open conformer (OC) devoid of peptide and B2M (peptide-free OC). In complex with B2M, presents non-canonical self-peptides carrying post-translational modifications, particularly phosphorylated self-peptides. Peptide-bound HLA-F-B2M acts as a ligand for LILRB1 inhibitory receptor, a major player in maternal-fetal tolerance. Peptide-free OC acts as a ligand for KIR3DS1 and KIR3DL2 receptors. Upon interaction with activating KIR3DS1 receptor on NK cells, triggers NK cell degranulation and anti-viral cytokine production. Through interaction with KIR3DL2 receptor, inhibits NK and T cell effector functions. May interact with other MHC class I OCs to cross-present exogenous viral, tumor or minor histompatibility antigens to cytotoxic CD8+ T cells, triggering effector and memory responses. May play a role in inflammatory responses in the peripheral nervous system. Through interaction with KIR3DL2, may protect motor neurons from astrocyte-induced toxicity. In Homo sapiens (Human), this protein is HLA class I histocompatibility antigen, alpha chain F.